Here is a 793-residue protein sequence, read N- to C-terminus: Protein translocase subunit SecA 2 (793 aa).

ATP-binding positions include Q77, G95–T99, and D493.

This sequence belongs to the SecA family. In terms of assembly, monomer and homodimer. Part of the essential Sec protein translocation apparatus which comprises SecA, SecYEG and auxiliary proteins SecDF. Other proteins may also be involved.

The protein resides in the cell membrane. The protein localises to the cytoplasm. The enzyme catalyses ATP + H2O + cellular proteinSide 1 = ADP + phosphate + cellular proteinSide 2.. Part of the Sec protein translocase complex. Interacts with the SecYEG preprotein conducting channel. Has a central role in coupling the hydrolysis of ATP to the transfer of proteins into and across the cell membrane, serving as an ATP-driven molecular motor driving the stepwise translocation of polypeptide chains across the membrane. The polypeptide is Protein translocase subunit SecA 2 (Streptococcus sanguinis (strain SK36)).